We begin with the raw amino-acid sequence, 20 residues long: Basic phospholipase A2 cannitoxin alpha chain (20 aa).

In terms of assembly, heterotrimer of alpha, beta, and gamma chains; non-covalently linked. Ca(2+) is required as a cofactor. Expressed by the venom gland.

The protein resides in the secreted. The enzyme catalyses a 1,2-diacyl-sn-glycero-3-phosphocholine + H2O = a 1-acyl-sn-glycero-3-phosphocholine + a fatty acid + H(+). Functionally, heterotrimer: Snake venom phospholipase A2 (PLA2) heterotrimer that acts as a potent presynaptic neurotoxin by blocking synaptic transmission and synaptic vesicle recycling. Enzymatic activity is essential for the neurotoxic effects. May act by binding in a calcium-dependent fashion to neurotonal pentraxin-1 (NPTX1) and neurotonal pentraxin-2 (NPTX2), but not to neuronal pentraxin receptor (NPTXR). Also binds to taipoxin-associated calcium binding protein 49 (RCN2), a protein localized in the lumen of endoplasmic reticulum. In terms of biological role, monomer (alpha chain): Snake venom phospholipase A2 (PLA2) that possesses a low level of presynaptic activity and the same high enzymatic activity than the heterotrimer. PLA2 catalyzes the calcium-dependent hydrolysis of the 2-acyl groups in 3-sn-phosphoglycerides. The polypeptide is Basic phospholipase A2 cannitoxin alpha chain (Oxyuranus scutellatus canni (Papuan taipan)).